The sequence spans 37 residues: Large ribosomal subunit protein bL36 (37 aa).

This sequence belongs to the bacterial ribosomal protein bL36 family.

The protein is Large ribosomal subunit protein bL36 of Trichodesmium erythraeum (strain IMS101).